The following is a 162-amino-acid chain: Regulator of ribonuclease activity A (162 aa).

Belongs to the RraA family. Homotrimer. Binds to both RNA-binding sites in the C-terminal region of Rne and to RhlB.

It is found in the cytoplasm. Its function is as follows. Globally modulates RNA abundance by binding to RNase E (Rne) and regulating its endonucleolytic activity. Can modulate Rne action in a substrate-dependent manner by altering the composition of the degradosome. Modulates RNA-binding and helicase activities of the degradosome. The chain is Regulator of ribonuclease activity A from Haemophilus influenzae (strain ATCC 51907 / DSM 11121 / KW20 / Rd).